The primary structure comprises 334 residues: Glyceraldehyde-3-phosphate dehydrogenase (334 aa).

Residues 11-12 (RI), D33, and S119 contribute to the NAD(+) site. D-glyceraldehyde 3-phosphate is bound by residues 149 to 151 (SCT) and T180. The active-site Nucleophile is the C150. NAD(+) is bound at residue N181. D-glyceraldehyde 3-phosphate is bound by residues R197, 210-211 (TG), and R233. Residue N314 coordinates NAD(+).

This sequence belongs to the glyceraldehyde-3-phosphate dehydrogenase family. In terms of assembly, homotetramer.

It localises to the cytoplasm. The catalysed reaction is D-glyceraldehyde 3-phosphate + phosphate + NAD(+) = (2R)-3-phospho-glyceroyl phosphate + NADH + H(+). It functions in the pathway carbohydrate degradation; glycolysis; pyruvate from D-glyceraldehyde 3-phosphate: step 1/5. Its function is as follows. Catalyzes the oxidative phosphorylation of glyceraldehyde 3-phosphate (G3P) to 1,3-bisphosphoglycerate (BPG) using the cofactor NAD. The first reaction step involves the formation of a hemiacetal intermediate between G3P and a cysteine residue, and this hemiacetal intermediate is then oxidized to a thioester, with concomitant reduction of NAD to NADH. The reduced NADH is then exchanged with the second NAD, and the thioester is attacked by a nucleophilic inorganic phosphate to produce BPG. This is Glyceraldehyde-3-phosphate dehydrogenase (gap) from Clostridium pasteurianum.